The chain runs to 247 residues: 14-3-3-like protein B (247 aa).

Belongs to the 14-3-3 family.

In Glycine max (Soybean), this protein is 14-3-3-like protein B (GF14B).